A 63-amino-acid polypeptide reads, in one-letter code: ATP synthase F(0) complex subunit 8 (63 aa).

A helical transmembrane segment spans residues Thr-8 to Leu-24. Lys-57 is subject to N6-acetyllysine.

This sequence belongs to the ATPase protein 8 family. As to quaternary structure, component of the ATP synthase complex composed at least of ATP5F1A/subunit alpha, ATP5F1B/subunit beta, ATP5MC1/subunit c (homooctomer), MT-ATP6/subunit a, MT-ATP8/subunit 8, ATP5ME/subunit e, ATP5MF/subunit f, ATP5MG/subunit g, ATP5MK/subunit k, ATP5MJ/subunit j, ATP5F1C/subunit gamma, ATP5F1D/subunit delta, ATP5F1E/subunit epsilon, ATP5PF/subunit F6, ATP5PB/subunit b, ATP5PD/subunit d, ATP5PO/subunit OSCP. ATP synthase complex consists of a soluble F(1) head domain (subunits alpha(3) and beta(3)) - the catalytic core - and a membrane F(0) domain - the membrane proton channel (subunits c, a, 8, e, f, g, k and j). These two domains are linked by a central stalk (subunits gamma, delta, and epsilon) rotating inside the F1 region and a stationary peripheral stalk (subunits F6, b, d, and OSCP). Interacts with PRICKLE3.

The protein localises to the mitochondrion membrane. Functionally, subunit 8, of the mitochondrial membrane ATP synthase complex (F(1)F(0) ATP synthase or Complex V) that produces ATP from ADP in the presence of a proton gradient across the membrane which is generated by electron transport complexes of the respiratory chain. ATP synthase complex consist of a soluble F(1) head domain - the catalytic core - and a membrane F(1) domain - the membrane proton channel. These two domains are linked by a central stalk rotating inside the F(1) region and a stationary peripheral stalk. During catalysis, ATP synthesis in the catalytic domain of F(1) is coupled via a rotary mechanism of the central stalk subunits to proton translocation. In vivo, can only synthesize ATP although its ATP hydrolase activity can be activated artificially in vitro. Part of the complex F(0) domain. This is ATP synthase F(0) complex subunit 8 from Physeter macrocephalus (Sperm whale).